The chain runs to 300 residues: Tyrosine recombinase XerC (300 aa).

Positions 2-88 constitute a Core-binding (CB) domain; that stretch reads TQEGKLEQQF…SLRSFYTFLL (87 aa). In terms of domain architecture, Tyr recombinase spans 109–294; it reads RLPKFFYSEE…TKEHLKSTYM (186 aa). Catalysis depends on residues arginine 150, lysine 174, histidine 246, arginine 249, and histidine 272. Catalysis depends on tyrosine 281, which acts as the O-(3'-phospho-DNA)-tyrosine intermediate.

This sequence belongs to the 'phage' integrase family. XerC subfamily. As to quaternary structure, forms a cyclic heterotetrameric complex composed of two molecules of XerC and two molecules of XerD.

It is found in the cytoplasm. Functionally, site-specific tyrosine recombinase, which acts by catalyzing the cutting and rejoining of the recombining DNA molecules. The XerC-XerD complex is essential to convert dimers of the bacterial chromosome into monomers to permit their segregation at cell division. It also contributes to the segregational stability of plasmids. The sequence is that of Tyrosine recombinase XerC from Listeria monocytogenes serotype 4a (strain HCC23).